A 98-amino-acid chain; its full sequence is Protein S100-A13 (98 aa).

The EF-hand domain maps to 18-53 (TTFFTFARQEGRKDSLSVNEFKELVTQQLPHLLKDV). The Ca(2+) site is built by serine 32, glutamate 37, aspartate 64, asparagine 66, aspartate 68, glutamate 70, and glutamate 75. Residue serine 32 is modified to Phosphoserine.

Belongs to the S-100 family. As to quaternary structure, homodimer. Part of a copper-dependent multiprotein complex containing S100A13, FGF1 and SYT1. Interacts with FGF1 and SYT1. Interacts with IL1A. Expressed in heart and skeletal muscle.

Its subcellular location is the cytoplasm. It localises to the secreted. In terms of biological role, plays a role in the export of proteins that lack a signal peptide and are secreted by an alternative pathway. Binds two calcium ions per subunit. Binds one copper ion. Binding of one copper ion does not interfere with calcium binding. Required for the copper-dependent stress-induced export of IL1A and FGF1. The calcium-free protein binds to lipid vesicles containing phosphatidylserine, but not to vesicles containing phosphatidylcholine. The sequence is that of Protein S100-A13 (S100A13) from Homo sapiens (Human).